Here is a 261-residue protein sequence, read N- to C-terminus: Gap junction beta-6 protein (261 aa).

Residues 1–22 are Cytoplasmic-facing; the sequence is MDWGTLHTVIGGVNKHSTSIGK. A helical membrane pass occupies residues 23–45; it reads VWITVIFIFRVMILVVAAQEVWG. At 46–75 the chain is on the extracellular side; sequence DEQEDFVCNTLQPGCKNVCYDHFFPVSHIR. The chain crosses the membrane as a helical span at residues 76–98; sequence LWALQLIFVSTPALLVAMHVAYY. Over 99–131 the chain is Cytoplasmic; sequence RHETARKFIRGEKRNEFKDLEDIKRQKVRIEGS. A helical transmembrane segment spans residues 132–154; the sequence is LWWTYTSSIFFRIIFEAAFMYVF. Residues 155–192 are Extracellular-facing; that stretch reads YFLYNGYHLPWVLKCGIDPCPNLVDCFISRPTEKTVFT. The helical transmembrane segment at 193–215 threads the bilayer; that stretch reads VFMISASVICMLLNVAELCYLLL. Residues 216–261 are Cytoplasmic-facing; the sequence is KLCFRRSKRTQAQRNHPNHALKESKQNEMNELISDSGQNAITSFPS.

The protein belongs to the connexin family. Beta-type (group I) subfamily. A connexon is composed of a hexamer of connexins. Interacts with CNST. In terms of tissue distribution, highly expressed in adult brain and skin. Less in uterus, lung and eye. Very low in testis and sciatic nerve. No expression before birth.

The protein resides in the cell membrane. The protein localises to the cell junction. It is found in the gap junction. One gap junction consists of a cluster of closely packed pairs of transmembrane channels, the connexons, through which materials of low MW diffuse from one cell to a neighboring cell. This is Gap junction beta-6 protein (Gjb6) from Mus musculus (Mouse).